A 281-amino-acid polypeptide reads, in one-letter code: Nicotinamide/nicotinic acid mononucleotide adenylyltransferase 1 (281 aa).

Residues Gly15 and Ser16 each contribute to the beta-nicotinamide D-ribonucleotide site. Positions 15, 16, 17, and 23 each coordinate NAD(+). 15 to 17 is a binding site for ATP; the sequence is GSF. Residue His24 participates in ATP binding. Residues Tyr55 and Lys57 each coordinate beta-nicotinamide D-ribonucleotide. Residue Lys57 participates in NAD(+) binding. Residue Lys58 participates in ATP binding. 2 residues coordinate beta-nicotinamide D-ribonucleotide: Trp92 and Thr95. Trp92 and Thr95 together coordinate NAD(+). The segment at 113-143 is disordered; it reads PQQNSPVLEKPGRKRKWAEQKQDISEKKSLE. Ser117 carries the post-translational modification Phosphoserine. The Nuclear localization signal signature appears at 123–129; that stretch reads PGRKRKW. Residues 129-143 are compositionally biased toward basic and acidic residues; that stretch reads WAEQKQDISEKKSLE. Positions 158, 160, 170, 171, 217, and 221 each coordinate NAD(+). 158–160 lines the ATP pocket; that stretch reads GAD. Beta-nicotinamide D-ribonucleotide-binding residues include Leu170 and Trp171. An ATP-binding site is contributed by 226-229; sequence TKIR.

The protein belongs to the eukaryotic NMN adenylyltransferase family. As to quaternary structure, homohexamer. Interacts with ADPRT/PARP1. Zn(2+) serves as cofactor. Requires Mg(2+) as cofactor.

It localises to the nucleus. The enzyme catalyses beta-nicotinamide D-ribonucleotide + ATP + H(+) = diphosphate + NAD(+). It carries out the reaction nicotinate beta-D-ribonucleotide + ATP + H(+) = deamido-NAD(+) + diphosphate. It functions in the pathway cofactor biosynthesis; NAD(+) biosynthesis; NAD(+) from nicotinamide D-ribonucleotide: step 1/1. The protein operates within cofactor biosynthesis; NAD(+) biosynthesis; deamido-NAD(+) from nicotinate D-ribonucleotide: step 1/1. With respect to regulation, activity is strongly inhibited by galotannin. Inhibited by P1-(adenosine-5')-P4-(nicotinic-acid-riboside-5')-tetraphosphate (Nap4AD). Its function is as follows. Catalyzes the formation of NAD(+) from nicotinamide mononucleotide (NMN) and ATP. Can also use the deamidated form; nicotinic acid mononucleotide (NaMN) as substrate with the same efficiency. Can use triazofurin monophosphate (TrMP) as substrate. Also catalyzes the reverse reaction, i.e. the pyrophosphorolytic cleavage of NAD(+). For the pyrophosphorolytic activity, prefers NAD(+) and NaAD as substrates and degrades NADH, nicotinic acid adenine dinucleotide phosphate (NHD) and nicotinamide guanine dinucleotide (NGD) less effectively. Involved in the synthesis of ATP in the nucleus, together with PARP1, PARG and NUDT5. Nuclear ATP generation is required for extensive chromatin remodeling events that are energy-consuming. Fails to cleave phosphorylated dinucleotides NADP(+), NADPH and NaADP(+). Also acts as a cofactor for glutamate and aspartate ADP-ribosylation by directing PARP1 catalytic activity to glutamate and aspartate residues on histones. Protects against axonal degeneration following mechanical or toxic insults. Delays axonal degeneration after axotomy. Results in a &gt;10-fold increase in intact neurites 72 hours after injury. Neural protection does not correlate with cellular NAD(+) levels but may still require enzyme activity. In Bos taurus (Bovine), this protein is Nicotinamide/nicotinic acid mononucleotide adenylyltransferase 1 (NMNAT1).